The chain runs to 348 residues: Ion-translocating oxidoreductase complex subunit D (348 aa).

A run of 4 helical transmembrane segments spans residues 23-43 (WVLACALPGLIAQTYFFGYGT), 44-64 (LIQLLLAISVAVALEAGIMLL), 72-91 (ALRDYSAVVTAWLLAVAIPP), and 126-146 (IAYVVLLISFPVQMTSWMAPI). FMN phosphoryl threonine is present on T187. A run of 5 helical transmembrane segments spans residues 214-234 (FAGIGWEWVNIAYLLGGLILL), 243-263 (IPMAMLAGLVFTALLAQLFAP), 266-286 (TASPMIHLLSGATMLGAFFIA), 300-320 (LIYGFFIGAMVFLIRSWGGFP), and 321-341 (DGVAFAVLLANMCVPLIDYYT).

This sequence belongs to the NqrB/RnfD family. In terms of assembly, the complex is composed of six subunits: RnfA, RnfB, RnfC, RnfD, RnfE and RnfG. Requires FMN as cofactor.

It is found in the cell inner membrane. Functionally, part of a membrane-bound complex that couples electron transfer with translocation of ions across the membrane. The chain is Ion-translocating oxidoreductase complex subunit D from Vibrio cholerae serotype O1 (strain ATCC 39315 / El Tor Inaba N16961).